The chain runs to 600 residues: Isocitrate dehydrogenase kinase/phosphatase (600 aa).

ATP-binding positions include 335–341 (APGIRGM) and lysine 356. Residue aspartate 390 is part of the active site.

The protein belongs to the AceK family.

It is found in the cytoplasm. It carries out the reaction L-seryl-[isocitrate dehydrogenase] + ATP = O-phospho-L-seryl-[isocitrate dehydrogenase] + ADP + H(+). Bifunctional enzyme which can phosphorylate or dephosphorylate isocitrate dehydrogenase (IDH) on a specific serine residue. This is a regulatory mechanism which enables bacteria to bypass the Krebs cycle via the glyoxylate shunt in response to the source of carbon. When bacteria are grown on glucose, IDH is fully active and unphosphorylated, but when grown on acetate or ethanol, the activity of IDH declines drastically concomitant with its phosphorylation. This is Isocitrate dehydrogenase kinase/phosphatase from Bordetella parapertussis (strain 12822 / ATCC BAA-587 / NCTC 13253).